Reading from the N-terminus, the 478-residue chain is Protein nucleotidyltransferase YdiU (478 aa).

The ATP site is built by Gly84, Gly86, Arg87, Lys107, Asp119, Gly120, Arg170, and Arg177. Asp246 (proton acceptor) is an active-site residue. Mg(2+) contacts are provided by Asn247 and Asp256. Asp256 lines the ATP pocket.

The protein belongs to the SELO family. It depends on Mg(2+) as a cofactor. The cofactor is Mn(2+).

The enzyme catalyses L-seryl-[protein] + ATP = 3-O-(5'-adenylyl)-L-seryl-[protein] + diphosphate. The catalysed reaction is L-threonyl-[protein] + ATP = 3-O-(5'-adenylyl)-L-threonyl-[protein] + diphosphate. It catalyses the reaction L-tyrosyl-[protein] + ATP = O-(5'-adenylyl)-L-tyrosyl-[protein] + diphosphate. It carries out the reaction L-histidyl-[protein] + UTP = N(tele)-(5'-uridylyl)-L-histidyl-[protein] + diphosphate. The enzyme catalyses L-seryl-[protein] + UTP = O-(5'-uridylyl)-L-seryl-[protein] + diphosphate. The catalysed reaction is L-tyrosyl-[protein] + UTP = O-(5'-uridylyl)-L-tyrosyl-[protein] + diphosphate. Its function is as follows. Nucleotidyltransferase involved in the post-translational modification of proteins. It can catalyze the addition of adenosine monophosphate (AMP) or uridine monophosphate (UMP) to a protein, resulting in modifications known as AMPylation and UMPylation. The protein is Protein nucleotidyltransferase YdiU of Escherichia coli (strain K12 / MC4100 / BW2952).